Here is a 353-residue protein sequence, read N- to C-terminus: Uroporphyrinogen decarboxylase (353 aa).

Substrate is bound by residues 26 to 30 (RQAGR), Asp76, Tyr153, Thr208, and His326.

It belongs to the uroporphyrinogen decarboxylase family. Homodimer.

It localises to the cytoplasm. The catalysed reaction is uroporphyrinogen III + 4 H(+) = coproporphyrinogen III + 4 CO2. It functions in the pathway porphyrin-containing compound metabolism; protoporphyrin-IX biosynthesis; coproporphyrinogen-III from 5-aminolevulinate: step 4/4. Its function is as follows. Catalyzes the decarboxylation of four acetate groups of uroporphyrinogen-III to yield coproporphyrinogen-III. In Chromohalobacter salexigens (strain ATCC BAA-138 / DSM 3043 / CIP 106854 / NCIMB 13768 / 1H11), this protein is Uroporphyrinogen decarboxylase.